A 226-amino-acid chain; its full sequence is PKHD-type hydroxylase PP_0862 (226 aa).

The 101-residue stretch at 78–178 (KVFPPLINCY…RYAAFFWTQS (101 aa)) folds into the Fe2OG dioxygenase domain. 3 residues coordinate Fe cation: His96, Asp98, and His159. Arg169 serves as a coordination point for 2-oxoglutarate.

Fe(2+) serves as cofactor. It depends on L-ascorbate as a cofactor.

The sequence is that of PKHD-type hydroxylase PP_0862 from Pseudomonas putida (strain ATCC 47054 / DSM 6125 / CFBP 8728 / NCIMB 11950 / KT2440).